The sequence spans 350 residues: Holliday junction branch migration complex subunit RuvB (350 aa).

Residues 4–184 (ADRIVTASSR…FGIVQRLEFY (181 aa)) are large ATPase domain (RuvB-L). ATP is bound by residues Ile-23, Arg-24, Gly-65, Lys-68, Thr-69, Thr-70, 131–133 (EDF), Arg-174, Tyr-184, and Arg-221. Residue Thr-69 participates in Mg(2+) binding. Residues 185–255 (STEDLATIVR…IADLALNMLD (71 aa)) are small ATPAse domain (RuvB-S). The head domain (RuvB-H) stretch occupies residues 258–350 (ERGFDHQDRR…TPDLFEGDIV (93 aa)). Residues Arg-294, Arg-313, and Arg-318 each contribute to the DNA site.

The protein belongs to the RuvB family. Homohexamer. Forms an RuvA(8)-RuvB(12)-Holliday junction (HJ) complex. HJ DNA is sandwiched between 2 RuvA tetramers; dsDNA enters through RuvA and exits via RuvB. An RuvB hexamer assembles on each DNA strand where it exits the tetramer. Each RuvB hexamer is contacted by two RuvA subunits (via domain III) on 2 adjacent RuvB subunits; this complex drives branch migration. In the full resolvosome a probable DNA-RuvA(4)-RuvB(12)-RuvC(2) complex forms which resolves the HJ.

The protein localises to the cytoplasm. The enzyme catalyses ATP + H2O = ADP + phosphate + H(+). The RuvA-RuvB-RuvC complex processes Holliday junction (HJ) DNA during genetic recombination and DNA repair, while the RuvA-RuvB complex plays an important role in the rescue of blocked DNA replication forks via replication fork reversal (RFR). RuvA specifically binds to HJ cruciform DNA, conferring on it an open structure. The RuvB hexamer acts as an ATP-dependent pump, pulling dsDNA into and through the RuvAB complex. RuvB forms 2 homohexamers on either side of HJ DNA bound by 1 or 2 RuvA tetramers; 4 subunits per hexamer contact DNA at a time. Coordinated motions by a converter formed by DNA-disengaged RuvB subunits stimulates ATP hydrolysis and nucleotide exchange. Immobilization of the converter enables RuvB to convert the ATP-contained energy into a lever motion, pulling 2 nucleotides of DNA out of the RuvA tetramer per ATP hydrolyzed, thus driving DNA branch migration. The RuvB motors rotate together with the DNA substrate, which together with the progressing nucleotide cycle form the mechanistic basis for DNA recombination by continuous HJ branch migration. Branch migration allows RuvC to scan DNA until it finds its consensus sequence, where it cleaves and resolves cruciform DNA. The protein is Holliday junction branch migration complex subunit RuvB of Stutzerimonas stutzeri (strain A1501) (Pseudomonas stutzeri).